A 464-amino-acid chain; its full sequence is Secretion-regulating guanine nucleotide exchange factor (464 aa).

RCC1 repeat units lie at residues 14 to 66 (AAAL…VVTD), 68 to 118 (GSLF…ILTE), 119 to 170 (NGQV…AATA), 172 to 229 (GTVF…SLTD), 230 to 282 (AGEL…AQTV), 283 to 349 (TGKV…LAVI), and 350 to 401 (GGVC…ALCQ). Residues 301–313 (VETREGWESEKQD) show a composition bias toward basic and acidic residues. A disordered region spans residues 301 to 323 (VETREGWESEKQDPSLPGSGPQK). The tract at residues 411–464 (HPSVTSPSPDATKEARSQEAMEQERNQKERHAETSPQAQSDRFRNGGLVAETLE) is disordered. The segment covering 421-443 (ATKEARSQEAMEQERNQKERHAE) has biased composition (basic and acidic residues). Ser-427 bears the Phosphoserine mark.

As to quaternary structure, interacts with SEC5. The interaction occurs only in the presence of magnesium or manganese and is stimulated by dCTP or GTP.

It localises to the cytoplasm. The protein resides in the nucleus. In terms of biological role, probable guanine nucleotide exchange factor (GEF), which may be involved in the secretion process. The sequence is that of Secretion-regulating guanine nucleotide exchange factor (SERGEF) from Bos taurus (Bovine).